The chain runs to 94 residues: Small ribosomal subunit protein bS20 (94 aa).

It belongs to the bacterial ribosomal protein bS20 family.

Binds directly to 16S ribosomal RNA. This is Small ribosomal subunit protein bS20 from Aquifex aeolicus (strain VF5).